A 99-amino-acid polypeptide reads, in one-letter code: NADH-quinone oxidoreductase subunit K (99 aa).

A run of 3 helical transmembrane segments spans residues 3 to 23 (PANYLILSALLFTIGTVGVLV), 28 to 48 (IVVFMSIELMLNAVNLTLVTF), and 59 to 79 (VMAFFVMVVAAAEVVIGLAII).

It belongs to the complex I subunit 4L family. NDH-1 is composed of 14 different subunits. Subunits NuoA, H, J, K, L, M, N constitute the membrane sector of the complex.

The protein localises to the cell membrane. It carries out the reaction a quinone + NADH + 5 H(+)(in) = a quinol + NAD(+) + 4 H(+)(out). Its function is as follows. NDH-1 shuttles electrons from NADH, via FMN and iron-sulfur (Fe-S) centers, to quinones in the respiratory chain. The immediate electron acceptor for the enzyme in this species is believed to be a menaquinone. Couples the redox reaction to proton translocation (for every two electrons transferred, four hydrogen ions are translocated across the cytoplasmic membrane), and thus conserves the redox energy in a proton gradient. The protein is NADH-quinone oxidoreductase subunit K of Frankia alni (strain DSM 45986 / CECT 9034 / ACN14a).